Consider the following 338-residue polypeptide: Protein SPATA31F3 (338 aa).

Residues 7 to 29 (VLWDVGYPLYTYGSICIIALIIW) form a helical membrane-spanning segment. At serine 152 the chain carries Phosphoserine. Over residues 290–306 (DRTKNIEKSPTVTKDHV) the composition is skewed to basic and acidic residues. A disordered region spans residues 290–338 (DRTKNIEKSPTVTKDHVWGATTQKTTEDPEAQPPSTEEEGLIFCDAPSA).

The protein belongs to the SPATA31 family.

Its subcellular location is the membrane. In Homo sapiens (Human), this protein is Protein SPATA31F3.